Consider the following 365-residue polypeptide: DNA replication and repair protein RecF (365 aa).

Residue 30–37 (GQNGSGKT) participates in ATP binding.

This sequence belongs to the RecF family.

Its subcellular location is the cytoplasm. In terms of biological role, the RecF protein is involved in DNA metabolism; it is required for DNA replication and normal SOS inducibility. RecF binds preferentially to single-stranded, linear DNA. It also seems to bind ATP. This Shewanella halifaxensis (strain HAW-EB4) protein is DNA replication and repair protein RecF.